Consider the following 391-residue polypeptide: DNA/RNA-binding protein KIN17 (391 aa).

The C2H2-type zinc-finger motif lies at 28 to 50; it reads CQMCQKQCRDENGFKCHCMSESH. The segment at 51–160 is winged helix-turn-helix (wHTH); sequence QRQLLLASEN…RQLELEKKKK (110 aa). The residue at position 135 (K135) is an N6,N6,N6-trimethyllysine; by METTL22; alternate. K135 is subject to N6-methyllysine; alternate. 2 coiled-coil regions span residues 147 to 180 and 252 to 275; these read ETIRRQLELEKKKKQDLDDEEKTAKFIEEQVRRG and AKKKKSALDEIMELEEEKKRTART. Residues 206 to 258 are disordered; it reads NLNKGAGGSAGATTSKSSSLGPSALKLLGSAASGKRKESSQSSAQPAKKKKSA. A C-terminal subdomain A region spans residues 282–332; the sequence is GIVVKIITKKLGEKYHKKKGVVKEVIDRYTAVVKMTDSGDRLKLDQTHLET. The tract at residues 338–389 is C-terminal subdomain B; sequence GKRVLVLNGGYRGNEGTLESINEKAFSATIVIETGPLKGRRVEGIQYEDISK.

It belongs to the KIN17 family. As to quaternary structure, associated with DNA polymerase alpha, RFC1 and cyclin A, in multiprotein DNA replication complexes. Also associates with replication origins at the G1/S phase boundary and throughout the S phase in vivo. As to expression, highly expressed in transformed mouse AtT20 neuroendocrine cells. Expressed at a lower level in testis, kidney, skeletal muscle, liver, lung, spleen, brain and heart and kidney. In testis, expressed at much higher levels in proliferating cells than in differentiating cells. Not detected in embryo.

It localises to the nucleus. Its subcellular location is the cytoplasm. In terms of biological role, involved in DNA replication and the cellular response to DNA damage. May participate in DNA replication factories and create a bridge between DNA replication and repair mediated by high molecular weight complexes. May play a role in illegitimate recombination and regulation of gene expression. May participate in mRNA processing. Binds, in vitro, to double-stranded DNA. Also shown to bind preferentially to curved DNA in vitro and in vivo. Binds via its C-terminal domain to RNA in vitro. This Mus musculus (Mouse) protein is DNA/RNA-binding protein KIN17.